A 32-amino-acid chain; its full sequence is Chaperone protein DnaK (32 aa).

It belongs to the heat shock protein 70 family.

In terms of biological role, acts as a chaperone. The sequence is that of Chaperone protein DnaK from Anabaena sp. (strain L31).